Consider the following 387-residue polypeptide: Cystathionine beta-lyase (387 aa).

Lys204 is modified (N6-(pyridoxal phosphate)lysine).

This sequence belongs to the trans-sulfuration enzymes family. Homotetramer. Pyridoxal 5'-phosphate serves as cofactor.

The protein resides in the cytoplasm. It catalyses the reaction L,L-cystathionine + H2O = L-homocysteine + pyruvate + NH4(+). The catalysed reaction is an S-substituted L-cysteine + H2O = a thiol + pyruvate + NH4(+). It participates in amino-acid biosynthesis; L-methionine biosynthesis via de novo pathway; L-homocysteine from L-cystathionine: step 1/1. Its function is as follows. Catalyzes the cleavage of cystathionine to homocysteine, pyruvate and ammonia during methionine biosynthesis. The chain is Cystathionine beta-lyase (metC) from Coxiella burnetii (strain RSA 493 / Nine Mile phase I).